Here is a 159-residue protein sequence, read N- to C-terminus: Small ribosomal subunit protein uS4 (159 aa).

Residues 106 to 158 (RRLQTLVFRMGLAKSIHHARQLVVHGHVLVAGRRVTSPGFLVPRELEDKITIE) enclose the S4 RNA-binding domain.

Belongs to the universal ribosomal protein uS4 family. In terms of assembly, part of the 30S ribosomal subunit. Contacts protein S5. The interaction surface between S4 and S5 is involved in control of translational fidelity.

Its function is as follows. One of the primary rRNA binding proteins, it binds directly to 16S rRNA where it nucleates assembly of the body of the 30S subunit. With S5 and S12 plays an important role in translational accuracy. The polypeptide is Small ribosomal subunit protein uS4 (Pyrobaculum calidifontis (strain DSM 21063 / JCM 11548 / VA1)).